A 178-amino-acid polypeptide reads, in one-letter code: MSAAVLEQSVLGSRRLSNFLVAAAVSVGGVGFLLASLSSYLGQDLLPFGHPAALIFVPQGLVMGLYSIAAALLASYLWYVIAVDVGSGSNRFDKESGVVVISRRGFRRPVCVEFPLKDVKAVKVEVRDGFNARRRVSLRLQGRRDLPLTRVGEPLPLAQLEQEGAELARFLGVNLEGL.

2 consecutive transmembrane segments (helical) span residues 19–39 and 61–81; these read FLVAAAVSVGGVGFLLASLSS and LVMGLYSIAAALLASYLWYVI.

Belongs to the Ycf4 family.

Its subcellular location is the cellular thylakoid membrane. Seems to be required for the assembly of the photosystem I complex. In Synechococcus sp. (strain CC9902), this protein is Photosystem I assembly protein Ycf4.